A 334-amino-acid polypeptide reads, in one-letter code: Phospho-N-acetylmuramoyl-pentapeptide-transferase (334 aa).

The next 9 membrane-spanning stretches (helical) occupy residues 5–25, 52–72, 81–101, 116–136, 148–168, 181–200, 230–250, 256–276, and 309–329; these read VVWL…PVTI, PTMG…VLLV, GLVV…DDFI, KILG…FKLG, GISF…VLLG, GLAS…LALV, VFMG…GAVV, LLVV…IQVI, and FWLL…DFWL.

Belongs to the glycosyltransferase 4 family. MraY subfamily. Requires Mg(2+) as cofactor.

Its subcellular location is the cell membrane. It catalyses the reaction UDP-N-acetyl-alpha-D-muramoyl-L-alanyl-gamma-D-glutamyl-meso-2,6-diaminopimeloyl-D-alanyl-D-alanine + di-trans,octa-cis-undecaprenyl phosphate = di-trans,octa-cis-undecaprenyl diphospho-N-acetyl-alpha-D-muramoyl-L-alanyl-D-glutamyl-meso-2,6-diaminopimeloyl-D-alanyl-D-alanine + UMP. It functions in the pathway cell wall biogenesis; peptidoglycan biosynthesis. In terms of biological role, catalyzes the initial step of the lipid cycle reactions in the biosynthesis of the cell wall peptidoglycan: transfers peptidoglycan precursor phospho-MurNAc-pentapeptide from UDP-MurNAc-pentapeptide onto the lipid carrier undecaprenyl phosphate, yielding undecaprenyl-pyrophosphoryl-MurNAc-pentapeptide, known as lipid I. This is Phospho-N-acetylmuramoyl-pentapeptide-transferase from Desulforamulus reducens (strain ATCC BAA-1160 / DSM 100696 / MI-1) (Desulfotomaculum reducens).